The sequence spans 316 residues: Transmembrane protein 231 (316 aa).

Residues 23 to 43 (AALFLLLAAALTYIPPLLVAF) form a helical membrane-spanning segment. 3 N-linked (GlcNAc...) asparagine glycosylation sites follow: N194, N199, and N221. Residues 262–282 (FWEMVKFAWVQYVSILLIFLW) traverse the membrane as a helical segment.

The protein belongs to the TMEM231 family. Part of the tectonic-like complex (also named B9 complex). Interacts with TMEM107.

Its subcellular location is the cell projection. It localises to the cilium membrane. Functionally, transmembrane component of the tectonic-like complex, a complex localized at the transition zone of primary cilia and acting as a barrier that prevents diffusion of transmembrane proteins between the cilia and plasma membranes. Required for ciliogenesis and sonic hedgehog/SHH signaling. This Homo sapiens (Human) protein is Transmembrane protein 231 (TMEM231).